The chain runs to 355 residues: MGDRPWQQQLQPHDQQAASCSVTAGMMMQASATSSSIHGNNIIRKDPGGGYDMAELDHIFLYLNSQDQASAAIQEQPQTLNIFPSQPMHAGEPSPKGSSSMAAINSAPSNNALAIAAGSSKRPPAAAAAGGQPSRLNNPADQPSASGKDGKAAVVKKEGGGGGGKHHGGASSAAASEHEGPKTPDAKTLRRLAQNREAARKSRLRKKAYIQNLETSRIRLSQLEQELVQRSRTQGAILGGGAFSAGIGGQSPEAAWFDGEYARWVESHERMMAHMRAAVEEQPQHGGVAAAAAEAQLRQLVDAAVAHHGVLVELKAAVASADVFHLVSGTWLPAAERCFLWIGGFRPSELIKVST.

2 disordered regions span residues phenylalanine 83–isoleucine 104 and glycine 118–threonine 188. Residues glycine 118–serine 134 show a composition bias toward low complexity. Residues arginine 135–serine 144 show a composition bias toward polar residues. 2 stretches are compositionally biased toward basic and acidic residues: residues lysine 148–glycine 159 and serine 176–threonine 188. Residues aspartate 185–arginine 230 form the bZIP domain. The interval lysine 187–lysine 207 is basic motif. The tract at residues leucine 213–leucine 227 is leucine-zipper. The DOG1 domain occupies alanine 254–threonine 355.

This sequence belongs to the bZIP family. As to quaternary structure, interacts with NPR5/NH4, NH5.1 and NH5.2.

The protein localises to the nucleus. Functionally, transcriptional regulator involved in defense response. This chain is Transcription factor TGAL9, found in Oryza sativa subsp. japonica (Rice).